Reading from the N-terminus, the 177-residue chain is Large ribosomal subunit protein uL6 (177 aa).

Belongs to the universal ribosomal protein uL6 family. In terms of assembly, part of the 50S ribosomal subunit.

Its function is as follows. This protein binds to the 23S rRNA, and is important in its secondary structure. It is located near the subunit interface in the base of the L7/L12 stalk, and near the tRNA binding site of the peptidyltransferase center. This Vibrio vulnificus (strain CMCP6) protein is Large ribosomal subunit protein uL6.